A 311-amino-acid polypeptide reads, in one-letter code: Probable cell division protein WhiA (311 aa).

The segment at residues 274-308 (SLKELGEMIPSGAISKSGINHRIRKINEFAEKLRE) is a DNA-binding region (H-T-H motif).

Belongs to the WhiA family.

Involved in cell division and chromosome segregation. The sequence is that of Probable cell division protein WhiA from Enterococcus faecalis (strain ATCC 700802 / V583).